A 353-amino-acid chain; its full sequence is Guanine nucleotide-binding protein alpha-1 subunit (353 aa).

A disordered region spans residues 1–26 (MGCGMSTEEKEGKARNEEIENQLKRD). Gly-2 carries the N-myristoyl glycine lipid modification. Residue Cys-3 is the site of S-palmitoyl cysteine attachment. The segment covering 7–26 (TEEKEGKARNEEIENQLKRD) has biased composition (basic and acidic residues). In terms of domain architecture, G-alpha spans 32–353 (NEIKMLLLGA…QENLRLCGLI (322 aa)). Positions 35 to 48 (KMLLLGAGESGKST) are G1 motif. Residues Glu-43, Ser-44, Gly-45, Lys-46, Ser-47, Thr-48, Asp-150, Leu-175, Thr-181, Gly-203, Asn-269, Lys-270, Asp-272, and Ala-325 each coordinate GTP. Ser-47 contacts Mg(2+). The tract at residues 173 to 181 (DVLRSRVKT) is G2 motif. Thr-181 serves as a coordination point for Mg(2+). The interval 196-205 (YRMFDVGGQR) is G3 motif. Residues 265 to 272 (ILFLNKID) are G4 motif. The tract at residues 323 to 328 (TCATDT) is G5 motif.

The protein belongs to the G-alpha family. G(q) subfamily. G proteins are composed of 3 units; alpha, beta and gamma. The alpha chain contains the guanine nucleotide binding site. Mg(2+) is required as a cofactor.

Guanine nucleotide-binding proteins (G proteins) are involved as modulators or transducers in various transmembrane signaling systems. This chain is Guanine nucleotide-binding protein alpha-1 subunit (gna-1), found in Neurospora crassa (strain ATCC 24698 / 74-OR23-1A / CBS 708.71 / DSM 1257 / FGSC 987).